The following is a 176-amino-acid chain: Small ribosomal subunit protein uS4 (176 aa).

An S4 RNA-binding domain is found at 103–165; sequence RRLQTIVYKK…PTSPYAKRRL (63 aa).

This sequence belongs to the universal ribosomal protein uS4 family. As to quaternary structure, part of the 30S ribosomal subunit. Contacts protein S5. The interaction surface between S4 and S5 is involved in control of translational fidelity.

Functionally, one of the primary rRNA binding proteins, it binds directly to 16S rRNA where it nucleates assembly of the body of the 30S subunit. Its function is as follows. With S5 and S12 plays an important role in translational accuracy. In Hyperthermus butylicus (strain DSM 5456 / JCM 9403 / PLM1-5), this protein is Small ribosomal subunit protein uS4.